The following is a 386-amino-acid chain: DNA-directed RNA polymerase subunit Rpo1C (386 aa).

Belongs to the RNA polymerase beta' chain family. In terms of assembly, part of the RNA polymerase complex.

Its subcellular location is the cytoplasm. The catalysed reaction is RNA(n) + a ribonucleoside 5'-triphosphate = RNA(n+1) + diphosphate. In terms of biological role, DNA-dependent RNA polymerase (RNAP) catalyzes the transcription of DNA into RNA using the four ribonucleoside triphosphates as substrates. Forms part of the jaw domain. This chain is DNA-directed RNA polymerase subunit Rpo1C, found in Methanococcus maripaludis (strain C7 / ATCC BAA-1331).